We begin with the raw amino-acid sequence, 68 residues long: Small integral membrane protein 45 (68 aa).

A helical membrane pass occupies residues 7-27; that stretch reads WFVPVYLVISVLILVGFGACI.

Highly expressed in brain.

The protein resides in the nucleus. The protein localises to the cytoplasm. Its subcellular location is the membrane. In terms of biological role, plays a role in the regulation of neuron maturation. This chain is Small integral membrane protein 45, found in Homo sapiens (Human).